Reading from the N-terminus, the 104-residue chain is Large ribosomal subunit protein bL21c (104 aa).

This sequence belongs to the bacterial ribosomal protein bL21 family. In terms of assembly, part of the 50S ribosomal subunit.

The protein localises to the plastid. It is found in the cyanelle. Its function is as follows. This protein binds to 23S rRNA. This Cyanophora paradoxa protein is Large ribosomal subunit protein bL21c.